The following is a 342-amino-acid chain: MLQGHSSVFQALLGTFFTWGMTAAGAALVFVFSSGQRRILDGSLGFAAGVMLAASYWSLLAPAVEMATSSGGFGAFAFFPVAVGFTLGAAFVYLADLLMPHLGAAEDPQTTLALNFGSTLMKKKSDPEGPALLFPESELSIRIGRAGLLSDKSENGEAYQRKKAAATGLPEGPAVPVPSRGNLAQPGGSSWRRIALLILAITIHNVPEGLAVGVGFGAIEKTASATFESARNLAIGIGIQNFPEGLAVSLPLRGAGFSTWRAFWYGQLSGMVEPLAGVFGAFAVVLAEPILPYALAFAAGAMVYVVMDDIIPEAQISGNGKLASWASILGFVVMMSLDVGLG.

7 consecutive transmembrane segments (helical) span residues 12–32, 44–64, 72–92, 194–214, 263–285, 290–307, and 322–342; these read LLGT…VFVF, LGFA…APAV, GFGA…AAFV, IALL…AVGV, FWYG…FAVV, ILPY…YVVM, and LASW…VGLG.

This sequence belongs to the ZIP transporter (TC 2.A.5) family.

It is found in the cell membrane. The protein localises to the nucleus. It localises to the cytoplasm. Its subcellular location is the golgi apparatus. It carries out the reaction Zn(2+)(in) = Zn(2+)(out). It catalyses the reaction Cu(2+)(in) = Cu(2+)(out). Zinc importer that regulates cytosolic zinc concentrations either via zinc influx from the extracellular compartment or efflux from intracellular organelles such as Golgi apparatus. May transport copper ions as well. The transport mechanism remains to be elucidated. The protein is Zinc transporter ZIP11 (SLC39A11) of Homo sapiens (Human).